The following is a 168-amino-acid chain: S-ribosylhomocysteine lyase (168 aa).

Fe cation-binding residues include His54, His58, and Cys128.

Belongs to the LuxS family. As to quaternary structure, homodimer. The cofactor is Fe cation.

The catalysed reaction is S-(5-deoxy-D-ribos-5-yl)-L-homocysteine = (S)-4,5-dihydroxypentane-2,3-dione + L-homocysteine. Involved in the synthesis of autoinducer 2 (AI-2) which is secreted by bacteria and is used to communicate both the cell density and the metabolic potential of the environment. The regulation of gene expression in response to changes in cell density is called quorum sensing. Catalyzes the transformation of S-ribosylhomocysteine (RHC) to homocysteine (HC) and 4,5-dihydroxy-2,3-pentadione (DPD). This Neisseria meningitidis serogroup C / serotype 2a (strain ATCC 700532 / DSM 15464 / FAM18) protein is S-ribosylhomocysteine lyase.